The sequence spans 218 residues: Octanoyltransferase (218 aa).

The 184-residue stretch at 27–210 (AGAEETLYLL…QFRAIFADST (184 aa)) folds into the BPL/LPL catalytic domain. Residues 72-79 (RGGNITCH), 139-141 (SIG), and 152-154 (GFA) each bind substrate. The Acyl-thioester intermediate role is filled by Cys-170.

It belongs to the LipB family.

It localises to the cytoplasm. The enzyme catalyses octanoyl-[ACP] + L-lysyl-[protein] = N(6)-octanoyl-L-lysyl-[protein] + holo-[ACP] + H(+). The protein operates within protein modification; protein lipoylation via endogenous pathway; protein N(6)-(lipoyl)lysine from octanoyl-[acyl-carrier-protein]: step 1/2. Functionally, catalyzes the transfer of endogenously produced octanoic acid from octanoyl-acyl-carrier-protein onto the lipoyl domains of lipoate-dependent enzymes. Lipoyl-ACP can also act as a substrate although octanoyl-ACP is likely to be the physiological substrate. The protein is Octanoyltransferase of Nitratidesulfovibrio vulgaris (strain DSM 19637 / Miyazaki F) (Desulfovibrio vulgaris).